Here is a 321-residue protein sequence, read N- to C-terminus: MATH domain and coiled-coil domain-containing protein At3g58260 (321 aa).

An MATH domain is found at N6–V135. Residues K232–G283 are a coiled coil.

In Arabidopsis thaliana (Mouse-ear cress), this protein is MATH domain and coiled-coil domain-containing protein At3g58260.